Here is a 653-residue protein sequence, read N- to C-terminus: Probable syringafactin export ATP-binding/permease protein SyfD (653 aa).

An ABC transporter domain is found at 6–244 (LELNGVTRRF…NEKTTERLPT (239 aa)). 42-49 (GASGSGKS) contacts ATP. 5 helical membrane passes run 252–272 (LMAN…ALIS), 278–298 (LLTM…VAIG), 526–546 (LALL…IGVM), 583–603 (MVCL…GYVF), and 616–636 (LGSI…FGFV).

Belongs to the ABC transporter superfamily. Macrolide exporter (TC 3.A.1.122) family. In terms of assembly, probably part of a tripartite efflux system, which is composed of an inner membrane transporter, a periplasmic membrane fusion protein, and an outer membrane component.

It localises to the cell inner membrane. Its function is as follows. Probably involved in the export of syringafactins. The chain is Probable syringafactin export ATP-binding/permease protein SyfD from Pseudomonas syringae pv. syringae (strain B728a).